A 51-amino-acid polypeptide reads, in one-letter code: Sperm protamine P1 (51 aa).

Disulfide bonds link Cys7–Cys15 and Cys38–Cys48.

The protein belongs to the protamine P1 family. As to quaternary structure, cross-linked by interchain disulfide bonds around the DNA-helix. Post-translationally, phosphorylated by SRPK1. Testis.

It is found in the nucleus. The protein resides in the chromosome. Functionally, protamines substitute for histones in the chromatin of sperm during the haploid phase of spermatogenesis. They compact sperm DNA into a highly condensed, stable and inactive complex. The sequence is that of Sperm protamine P1 (Prm1) from Mus musculus (Mouse).